We begin with the raw amino-acid sequence, 22 residues long: Chitin-binding protein 3 (22 aa).

Post-translationally, glycosylated; contains 2.5% carbohydrates.

Chitin-binding protein. Has antifungal activity against F.solani, F.oxysporum, C.musae and C.gloesporoides but not against P.oligandrum. Depending on concentration the antifungal activity can be fungistatic or fungicidal. Inhibits both spore germination and mycelial growth in F.solani at a concentration of 0.1 mg/ml. Has antifungal activity against C.krusei, C.albicans, C.tropicalis and C.parapsilosis. Has no chitinase, beta-glucanase or hemagglutinating activity. Acts as a flocculent. This Moringa oleifera (Horseradish tree) protein is Chitin-binding protein 3.